A 415-amino-acid polypeptide reads, in one-letter code: Casein kinase I isoform delta (415 aa).

One can recognise a Protein kinase domain in the interval 9–277 (YRLGRKIGSG…YLRQLFRNLF (269 aa)). ATP contacts are provided by residues 15–23 (IGSGSFGDI) and K38. The active-site Proton acceptor is D128. Residues 278-364 (HRQGFSYDYV…TSPRPVSGME (87 aa)) are centrosomal localization signal (CLS). Basic and acidic residues predominate over residues 301-315 (ADDAERERRDREERL). The disordered stretch occupies residues 301 to 415 (ADDAERERRD…SSGLQSVVHR (115 aa)). Residues 317–342 (HSRNPATRGLPSTASGRLRGTQEVAP) are autoinhibitory. S328 and S331 each carry phosphoserine. The span at 347–358 (TPTSHTANTSPR) shows a compositional bias: polar residues. Residue S370 is modified to Phosphoserine. R375 is modified (omega-N-methylarginine). A compositionally biased stretch (polar residues) spans 380-400 (NVSSSDLTGRQDTSRMSTSQI). Phosphoserine occurs at positions 382, 383, 384, 401, 407, and 411.

The protein belongs to the protein kinase superfamily. CK1 Ser/Thr protein kinase family. Casein kinase I subfamily. In terms of assembly, monomer. Component of the circadian core oscillator, which includes the CRY proteins, CLOCK, or NPAS2, BMAL1 or BMAL2, CSNK1D and/or CSNK1E, TIMELESS and the PER proteins. Interacts directly with PER1 and PER2 which may lead to their degradation. Interacts with MAP1A. Interacts with MAPT/TAU, DBNDD2, AIB1/NCOA3 and ESR1. Interacts with AKAP9/AKAP450; this interaction promotes centrosomal subcellular location. Binds to tubulins in mitotic cells upon DNA damage. Interacts with GJA1. Interacts with SNAPIN. Interacts with DNMT1. Interacts with DDX3X; this interaction enhances CSNK1D kinase activity in vitro, but it is unclear whether this interaction is physiologically relevant. Interacts with FAM83A, FAM83B, FAM83E and FAM83H (via DUF1669). Post-translationally, autophosphorylated on serine and threonine residues; this autophosphorylation represses activity. Reactivated by phosphatase-mediated dephosphorylation. May be dephosphorylated by PP1. As to expression, expressed ubiquitously. However, kinase activity is not uniform, with highest kinase activity in splenocytes.

It localises to the cytoplasm. It is found in the nucleus. The protein localises to the cytoskeleton. The protein resides in the microtubule organizing center. Its subcellular location is the centrosome. It localises to the perinuclear region. It is found in the cell membrane. The protein localises to the spindle. The protein resides in the golgi apparatus. The catalysed reaction is L-seryl-[protein] + ATP = O-phospho-L-seryl-[protein] + ADP + H(+). The enzyme catalyses L-threonyl-[protein] + ATP = O-phospho-L-threonyl-[protein] + ADP + H(+). It catalyses the reaction L-seryl-[tau protein] + ATP = O-phospho-L-seryl-[tau protein] + ADP + H(+). It carries out the reaction L-threonyl-[tau protein] + ATP = O-phospho-L-threonyl-[tau protein] + ADP + H(+). Its activity is regulated as follows. Exhibits substrate-dependent heparin activation. Drug-mediated inhibition leads to a delay of the oscillations with the magnitude of this effect dependent upon the timing of drug administration. Inhibited by phosphorylation. In terms of biological role, essential serine/threonine-protein kinase that regulates diverse cellular growth and survival processes including Wnt signaling, DNA repair and circadian rhythms. It can phosphorylate a large number of proteins. Casein kinases are operationally defined by their preferential utilization of acidic proteins such as caseins as substrates. Phosphorylates connexin-43/GJA1, MAP1A, SNAPIN, MAPT/TAU, TOP2A, DCK, HIF1A, EIF6, p53/TP53, DVL2, DVL3, ESR1, AIB1/NCOA3, DNMT1, PKD2, YAP1, PER1 and PER2. Central component of the circadian clock. In balance with PP1, determines the circadian period length through the regulation of the speed and rhythmicity of PER1 and PER2 phosphorylation. Controls PER1 and PER2 nuclear transport and degradation. YAP1 phosphorylation promotes its SCF(beta-TRCP) E3 ubiquitin ligase-mediated ubiquitination and subsequent degradation. DNMT1 phosphorylation reduces its DNA-binding activity. Phosphorylation of ESR1 and AIB1/NCOA3 stimulates their activity and coactivation. Phosphorylation of DVL2 and DVL3 regulates WNT3A signaling pathway that controls neurite outgrowth. Phosphorylates NEDD9/HEF1. EIF6 phosphorylation promotes its nuclear export. Triggers down-regulation of dopamine receptors in the forebrain. Activates DCK in vitro by phosphorylation. TOP2A phosphorylation favors DNA cleavable complex formation. May regulate the formation of the mitotic spindle apparatus in extravillous trophoblast. Modulates connexin-43/GJA1 gap junction assembly by phosphorylation. Probably involved in lymphocyte physiology. Regulates fast synaptic transmission mediated by glutamate. This is Casein kinase I isoform delta (Csnk1d) from Mus musculus (Mouse).